Reading from the N-terminus, the 273-residue chain is Dermonecrotic toxin LhSicTox-alphaIA2biii (273 aa).

H5 is an active-site residue. The Mg(2+) site is built by E25 and D27. The active-site Nucleophile is the H41. 2 cysteine pairs are disulfide-bonded: C45–C51 and C47–C190. A Mg(2+)-binding site is contributed by D85.

It belongs to the arthropod phospholipase D family. Class II subfamily. Mg(2+) is required as a cofactor. In terms of tissue distribution, expressed by the venom gland.

It localises to the secreted. The catalysed reaction is an N-(acyl)-sphingosylphosphocholine = an N-(acyl)-sphingosyl-1,3-cyclic phosphate + choline. It carries out the reaction an N-(acyl)-sphingosylphosphoethanolamine = an N-(acyl)-sphingosyl-1,3-cyclic phosphate + ethanolamine. It catalyses the reaction a 1-acyl-sn-glycero-3-phosphocholine = a 1-acyl-sn-glycero-2,3-cyclic phosphate + choline. The enzyme catalyses a 1-acyl-sn-glycero-3-phosphoethanolamine = a 1-acyl-sn-glycero-2,3-cyclic phosphate + ethanolamine. In terms of biological role, dermonecrotic toxins cleave the phosphodiester linkage between the phosphate and headgroup of certain phospholipids (sphingolipid and lysolipid substrates), forming an alcohol (often choline) and a cyclic phosphate. This toxin acts on sphingomyelin (SM). It may also act on ceramide phosphoethanolamine (CPE), lysophosphatidylcholine (LPC) and lysophosphatidylethanolamine (LPE), but not on lysophosphatidylserine (LPS), and lysophosphatidylglycerol (LPG). It acts by transphosphatidylation, releasing exclusively cyclic phosphate products as second products. Induces dermonecrosis, hemolysis, increased vascular permeability, edema, inflammatory response, and platelet aggregation. The sequence is that of Dermonecrotic toxin LhSicTox-alphaIA2biii from Loxosceles hirsuta (Recluse spider).